Here is a 487-residue protein sequence, read N- to C-terminus: UDP-N-acetylmuramate--L-alanine ligase (487 aa).

Glycine 122–serine 128 is an ATP binding site.

The protein belongs to the MurCDEF family.

Its subcellular location is the cytoplasm. It carries out the reaction UDP-N-acetyl-alpha-D-muramate + L-alanine + ATP = UDP-N-acetyl-alpha-D-muramoyl-L-alanine + ADP + phosphate + H(+). It participates in cell wall biogenesis; peptidoglycan biosynthesis. In terms of biological role, cell wall formation. In Corynebacterium urealyticum (strain ATCC 43042 / DSM 7109), this protein is UDP-N-acetylmuramate--L-alanine ligase.